The sequence spans 346 residues: Oxidoreductase calI (346 aa).

The tract at residues V11 to P33 is disordered. A compositionally biased stretch (basic and acidic residues) spans G18–D32. 4 residues coordinate NADP(+): L52, K76, D100, and N128. Residue S181 is the Proton donor of the active site. Positions 208, 212, and 241 each coordinate NADP(+). The Proton acceptor role is filled by Y208. K212 acts as the Lowers pKa of active site Tyr in catalysis.

This sequence belongs to the short-chain dehydrogenases/reductases (SDR) family.

Its pathway is secondary metabolite biosynthesis. Its function is as follows. Oxidoreductase; part of the gene cluster that mediates the biosynthesis of calbistrin A and related compounds. Calbistrin A is a secondary metabolite with an interesting structure that was recently found to have bioactivity against leukemia cells. It consists of two polyketides linked by an ester bond: a bicyclic decalin containing polyketide and a linear 12 carbon dioic acid structure. The polyketide synthase calA is probably responsible for forming the decalin moiety. Because calA lacks a designated enoylreductase (ER) domain, the required activity is provided by the trans-enoyl reductase calK. Following release from the PKS, calF then probably catalyzes the oxidation and the subsequent Diels Alder cycloisomerization that lead to the formation of the decalin moiety. The decalin polyketide backbone includes two C-methyl groups, at C7 and C11 in backbone, of which the C7 position is probably methylated by the methyltransferase domain of calA. A candidate for adding the methyl group at C11, if not done by CalA, is the cluster methyltransferase calH. Several additional tailoring enzymes within the cluster could be involved in the modification of the decalin polyketide product. Those include the 3 cytochrome P450 monooxygenases CalE, CalG and CalL, of which one might be responsible for the introduction of the extra hydroxyl group attached to the backbone of the decalin moiety, at position C9 in the backbone, that allows for attachment of the linear moiety. One tailoring enzyme activity that is expected to be involved in biosynthesis of calbistrin is an acyltransferase for connecting the two polyketide synthase products, and which could be performed by the cluster acyltransferase calJ. The enzyme responsible for the biosynthesis of the linear moiety, probably a second PKS, has not been identified yet. This chain is Oxidoreductase calI, found in Penicillium decumbens.